The primary structure comprises 551 residues: (6-4)DNA photolyase (551 aa).

Residues 13 to 157 (AAAMVWFRKG…DVFSPVSHTL (145 aa)) form the Photolyase/cryptochrome alpha/beta domain. Glutamate 254 provides a ligand contact to phosphate. FAD contacts are provided by residues lysine 255, 268 to 272 (TTVLS), 309 to 313 (QLLWR), 372 to 375 (WMHH), arginine 378, 407 to 409 (DSD), and asparagine 413. A DNA-binding site is contributed by tryptophan 312. The tract at residues 374–379 (HHLARH) is interaction with DNA. A DNA-binding site is contributed by tryptophan 419. Residues 508–551 (YASNRLDDDKPDKGKSSNSSRRKLSAGSQVTPNSSKTKQLKRSS) form a disordered region. A compositionally biased stretch (basic and acidic residues) spans 512–522 (RLDDDKPDKGK). Residues 533–544 (AGSQVTPNSSKT) are compositionally biased toward polar residues.

The protein belongs to the DNA photolyase class-1 family. The cofactor is FAD.

The catalysed reaction is (6-4) photoproduct (in DNA) = 2 pyrimidine residues (in DNA).. In terms of biological role, involved in repair of UV radiation-induced DNA damage. Catalyzes the photoreactivation of pyrimidine [6-4] pyrimidone photoproduct (6-4 products). The sequence is that of (6-4)DNA photolyase (UVR3) from Oryza sativa subsp. japonica (Rice).